Consider the following 166-residue polypeptide: Large ribosomal subunit protein uL10 (166 aa).

As to quaternary structure, part of the ribosomal stalk of the 50S ribosomal subunit. The N-terminus interacts with L11 and 23S rRNA to form the base of the stalk. The C-terminus forms an elongated spine to which L12 dimers bind in a sequential fashion forming a pentameric L10(L12)2(L12)2 complex.

Its function is as follows. Forms part of the ribosomal stalk, playing a central role in the interaction of the ribosome with GTP-bound translation factors (such as IF-2, EF-Tu, EF-G and RF3). This chain is Large ribosomal subunit protein uL10 (rplJ), found in Bacillus subtilis (strain 168).